The sequence spans 545 residues: Eukaryotic translation initiation factor 3 subunit D-2 (545 aa).

The interval 94–148 (FQRGRFRGNTRNNPRTRGRTGRGGAVTGTGGNQPGVGVNERTKYGKGRDNRRQMG) is disordered. The segment covering 95–113 (QRGRFRGNTRNNPRTRGRT) has biased composition (basic residues). Gly residues predominate over residues 114-127 (GRGGAVTGTGGNQP). The span at 133 to 145 (ERTKYGKGRDNRR) shows a compositional bias: basic and acidic residues. Positions 287–301 (QFDLLTVNETALEPP) are RNA gate.

Belongs to the eIF-3 subunit D family. As to quaternary structure, component of the eukaryotic translation initiation factor 3 (eIF-3) complex. The eIF-3 complex interacts with pix.

It localises to the cytoplasm. Its function is as follows. mRNA cap-binding component of the eukaryotic translation initiation factor 3 (eIF-3) complex, which is involved in protein synthesis of a specialized repertoire of mRNAs and, together with other initiation factors, stimulates binding of mRNA and methionyl-tRNAi to the 40S ribosome. The eIF-3 complex specifically targets and initiates translation of a subset of mRNAs involved in cell proliferation. In the eIF-3 complex, eif3d specifically recognizes and binds the 7-methylguanosine cap of a subset of mRNAs. In Drosophila pseudoobscura pseudoobscura (Fruit fly), this protein is Eukaryotic translation initiation factor 3 subunit D-2.